The primary structure comprises 281 residues: Diaminopimelate epimerase (281 aa).

Substrate is bound by residues Asn14 and Asn65. Cys74 acts as the Proton donor in catalysis. Substrate is bound by residues 75-76, Asn165, Asn198, and 216-217; these read GN and ER. The active-site Proton acceptor is the Cys225. 226–227 contacts substrate; sequence GT.

It belongs to the diaminopimelate epimerase family. As to quaternary structure, homodimer.

Its subcellular location is the cytoplasm. It catalyses the reaction (2S,6S)-2,6-diaminopimelate = meso-2,6-diaminopimelate. It functions in the pathway amino-acid biosynthesis; L-lysine biosynthesis via DAP pathway; DL-2,6-diaminopimelate from LL-2,6-diaminopimelate: step 1/1. In terms of biological role, catalyzes the stereoinversion of LL-2,6-diaminopimelate (L,L-DAP) to meso-diaminopimelate (meso-DAP), a precursor of L-lysine and an essential component of the bacterial peptidoglycan. This chain is Diaminopimelate epimerase, found in Leptospira interrogans serogroup Icterohaemorrhagiae serovar copenhageni (strain Fiocruz L1-130).